A 427-amino-acid polypeptide reads, in one-letter code: Enolase (427 aa).

(2R)-2-phosphoglycerate is bound at residue Gln-163. The Proton donor role is filled by Glu-205. Residues Asp-242, Glu-285, and Asp-312 each coordinate Mg(2+). Lys-337, Arg-366, Ser-367, and Lys-388 together coordinate (2R)-2-phosphoglycerate. Lys-337 functions as the Proton acceptor in the catalytic mechanism.

The protein belongs to the enolase family. It depends on Mg(2+) as a cofactor.

The protein localises to the cytoplasm. It localises to the secreted. Its subcellular location is the cell surface. It carries out the reaction (2R)-2-phosphoglycerate = phosphoenolpyruvate + H2O. It participates in carbohydrate degradation; glycolysis; pyruvate from D-glyceraldehyde 3-phosphate: step 4/5. In terms of biological role, catalyzes the reversible conversion of 2-phosphoglycerate (2-PG) into phosphoenolpyruvate (PEP). It is essential for the degradation of carbohydrates via glycolysis. This is Enolase from Burkholderia ambifaria (strain MC40-6).